We begin with the raw amino-acid sequence, 476 residues long: Siroheme synthase (476 aa).

Positions Met1 to Leu204 are precorrin-2 dehydrogenase /sirohydrochlorin ferrochelatase. NAD(+) contacts are provided by residues Ser22–Val23 and Pro43–Thr44. Residue Ser129 is modified to Phosphoserine. The segment at Gly218–Pro476 is uroporphyrinogen-III C-methyltransferase. Pro227 is an S-adenosyl-L-methionine binding site. The active-site Proton acceptor is Asp250. Catalysis depends on Lys272, which acts as the Proton donor. S-adenosyl-L-methionine-binding positions include Gly303–Asp305, Ile308, Thr333–Ala334, Met385, and Gly414.

In the N-terminal section; belongs to the precorrin-2 dehydrogenase / sirohydrochlorin ferrochelatase family. It in the C-terminal section; belongs to the precorrin methyltransferase family.

The enzyme catalyses uroporphyrinogen III + 2 S-adenosyl-L-methionine = precorrin-2 + 2 S-adenosyl-L-homocysteine + H(+). The catalysed reaction is precorrin-2 + NAD(+) = sirohydrochlorin + NADH + 2 H(+). It carries out the reaction siroheme + 2 H(+) = sirohydrochlorin + Fe(2+). Its pathway is cofactor biosynthesis; adenosylcobalamin biosynthesis; precorrin-2 from uroporphyrinogen III: step 1/1. The protein operates within cofactor biosynthesis; adenosylcobalamin biosynthesis; sirohydrochlorin from precorrin-2: step 1/1. It functions in the pathway porphyrin-containing compound metabolism; siroheme biosynthesis; precorrin-2 from uroporphyrinogen III: step 1/1. It participates in porphyrin-containing compound metabolism; siroheme biosynthesis; siroheme from sirohydrochlorin: step 1/1. Its pathway is porphyrin-containing compound metabolism; siroheme biosynthesis; sirohydrochlorin from precorrin-2: step 1/1. Its function is as follows. Multifunctional enzyme that catalyzes the SAM-dependent methylations of uroporphyrinogen III at position C-2 and C-7 to form precorrin-2 via precorrin-1. Then it catalyzes the NAD-dependent ring dehydrogenation of precorrin-2 to yield sirohydrochlorin. Finally, it catalyzes the ferrochelation of sirohydrochlorin to yield siroheme. This is Siroheme synthase from Nitrosomonas eutropha (strain DSM 101675 / C91 / Nm57).